A 318-amino-acid polypeptide reads, in one-letter code: MTRHIILDCDPGHDDAIALILALAHPNLVPLAVTTSAGNQTPDKTLNNALRILTLLNRGDIPVAGGATKPLTRELIIADNVHGETGLDGPALPEPSFSPQAITAVELMAQQIRQSTQPVTLVPTGPLTNIALLLASHSELHPKIERIVLMGGAAGVGNWTPAAEFNIFVDPEAADIVFKSGIPITMCGLDVTHQAQIMDEDIERIRAIPNPIAQCVAELLDFFMIYHRDPKWGFIGAPLHDPCTIAWLLKPELFEAQDCWVGIETQSELTLGMTVVDRYQLTGKTANATVLFGLDRLGFVDLLVDSLRVYDPTYLNRR.

His-240 is an active-site residue.

It belongs to the IUNH family. RihA subfamily.

Hydrolyzes cytidine or uridine to ribose and cytosine or uracil, respectively. In Shewanella baltica (strain OS185), this protein is Pyrimidine-specific ribonucleoside hydrolase RihA.